Consider the following 125-residue polypeptide: Large ribosomal subunit protein bL12 (125 aa).

Belongs to the bacterial ribosomal protein bL12 family. In terms of assembly, homodimer. Part of the ribosomal stalk of the 50S ribosomal subunit. Forms a multimeric L10(L12)X complex, where L10 forms an elongated spine to which 2 to 4 L12 dimers bind in a sequential fashion. Binds GTP-bound translation factors.

Its function is as follows. Forms part of the ribosomal stalk which helps the ribosome interact with GTP-bound translation factors. Is thus essential for accurate translation. This Methylibium petroleiphilum (strain ATCC BAA-1232 / LMG 22953 / PM1) protein is Large ribosomal subunit protein bL12.